We begin with the raw amino-acid sequence, 890 residues long: DNA mismatch repair protein MutS (890 aa).

634–641 (GPNMGGKS) is an ATP binding site.

It belongs to the DNA mismatch repair MutS family.

Its function is as follows. This protein is involved in the repair of mismatches in DNA. It is possible that it carries out the mismatch recognition step. This protein has a weak ATPase activity. This chain is DNA mismatch repair protein MutS, found in Burkholderia pseudomallei (strain K96243).